Consider the following 128-residue polypeptide: uncharacterized protein (128 aa).

This is an uncharacterized protein from Botryotinia fuckeliana (Noble rot fungus).